The following is a 157-amino-acid chain: 17.8 kDa class I heat shock protein (157 aa).

A sHSP domain is found at 43-157 (ETAAFVNTHI…PEVKAIDISG (115 aa)).

Belongs to the small heat shock protein (HSP20) family. As to quaternary structure, forms oligomeric structures.

It is found in the cytoplasm. The chain is 17.8 kDa class I heat shock protein from Daucus carota (Wild carrot).